We begin with the raw amino-acid sequence, 444 residues long: 23S rRNA (uracil(1939)-C(5))-methyltransferase RlmD (444 aa).

Residues 5 to 64 (KPKLNLTSQTARIVNLSHDGRGIARVNGKATFIQGALPGEVVEFQYTRVKKDFDEGKLLS) form the TRAM domain. Residues Cys-77, Cys-83, Cys-86, and Cys-166 each coordinate [4Fe-4S] cluster. Gln-276, Phe-305, Asn-310, Glu-326, Asn-353, and Asp-374 together coordinate S-adenosyl-L-methionine. Cys-400 functions as the Nucleophile in the catalytic mechanism.

It belongs to the class I-like SAM-binding methyltransferase superfamily. RNA M5U methyltransferase family. RlmD subfamily.

It carries out the reaction uridine(1939) in 23S rRNA + S-adenosyl-L-methionine = 5-methyluridine(1939) in 23S rRNA + S-adenosyl-L-homocysteine + H(+). Its function is as follows. Catalyzes the formation of 5-methyl-uridine at position 1939 (m5U1939) in 23S rRNA. This Legionella pneumophila (strain Paris) protein is 23S rRNA (uracil(1939)-C(5))-methyltransferase RlmD.